A 412-amino-acid chain; its full sequence is Glucose-1-phosphate adenylyltransferase (412 aa).

Alpha-D-glucose 1-phosphate-binding positions include tyrosine 98, glycine 163, 178–179 (EK), and serine 189.

The protein belongs to the bacterial/plant glucose-1-phosphate adenylyltransferase family. Homotetramer.

The catalysed reaction is alpha-D-glucose 1-phosphate + ATP + H(+) = ADP-alpha-D-glucose + diphosphate. Its pathway is glycan biosynthesis; glycogen biosynthesis. Its function is as follows. Involved in the biosynthesis of ADP-glucose, a building block required for the elongation reactions to produce glycogen. Catalyzes the reaction between ATP and alpha-D-glucose 1-phosphate (G1P) to produce pyrophosphate and ADP-Glc. The protein is Glucose-1-phosphate adenylyltransferase of Thermosipho africanus (strain TCF52B).